The following is a 358-amino-acid chain: Sulfate/thiosulfate import ATP-binding protein CysA (358 aa).

The region spanning 3–237 (IKIENLEKHF…PQTPFVTQFV (235 aa)) is the ABC transporter domain. An ATP-binding site is contributed by 35-42 (GPSGCGKT).

It belongs to the ABC transporter superfamily. Sulfate/tungstate importer (TC 3.A.1.6) family. The complex is composed of two ATP-binding proteins (CysA), two transmembrane proteins (CysT and CysW) and a solute-binding protein (CysP).

Its subcellular location is the cell inner membrane. It carries out the reaction sulfate(out) + ATP + H2O = sulfate(in) + ADP + phosphate + H(+). The catalysed reaction is thiosulfate(out) + ATP + H2O = thiosulfate(in) + ADP + phosphate + H(+). Part of the ABC transporter complex CysAWTP involved in sulfate/thiosulfate import. Responsible for energy coupling to the transport system. The polypeptide is Sulfate/thiosulfate import ATP-binding protein CysA (Mannheimia succiniciproducens (strain KCTC 0769BP / MBEL55E)).